A 311-amino-acid polypeptide reads, in one-letter code: Taste receptor type 2 member 9 (311 aa).

Over 1–9 the chain is Extracellular; sequence MPSTIEAIY. Residues 10 to 32 form a helical membrane-spanning segment; it reads IILIAGELTIGIWGNGFIVLVNC. Residues 33-52 lie on the Cytoplasmic side of the membrane; sequence IDWLKRRDVSLIDIILISLA. A helical transmembrane segment spans residues 53-72; that stretch reads ISRICLLCVISLDGFFILLF. The Extracellular portion of the chain corresponds to 73–86; that stretch reads PGTYDTNVLESIMD. The helical transmembrane segment at 87-109 threads the bilayer; the sequence is AVWTFANNSSLWFTSCLSIFYLL. Over 110-128 the chain is Cytoplasmic; sequence KIANISHPFFFWLKLKINK. A helical membrane pass occupies residues 129–146; the sequence is VILAILLGSFLISLIISF. At 147–179 the chain is on the extracellular side; the sequence is PINGMWYNLFKVSHEENITWAFKVSTIPGAFKQ. N163 is a glycosylation site (N-linked (GlcNAc...) asparagine). A helical transmembrane segment spans residues 180 to 202; sequence LTLNLGAMVPFILCLISFFLLLF. Over 203–233 the chain is Cytoplasmic; sequence SLVRHTKQIQLHATGFRDPSTEAHMRAVKAV. A helical membrane pass occupies residues 234 to 256; sequence IIFLLLLILYYPVFLVMTSSTLI. Topologically, residues 257-260 are extracellular; sequence PQGK. A helical transmembrane segment spans residues 261–283; the sequence is LVLMIGDIVTVIFPSSHSFILIM. At 284-311 the chain is on the cytoplasmic side; that stretch reads GNSKLRAAFLKMLRFVKGFLRRRKPFVP.

Belongs to the G-protein coupled receptor T2R family.

The protein localises to the membrane. Functionally, gustducin-coupled receptor implicated in the perception of bitter compounds in the oral cavity and the gastrointestinal tract. Signals through PLCB2 and the calcium-regulated cation channel TRPM5. In Macaca mulatta (Rhesus macaque), this protein is Taste receptor type 2 member 9 (TAS2R9).